Consider the following 567-residue polypeptide: Geranylgeranyl transferase type-2 subunit alpha (567 aa).

PFTA repeat units follow at residues 44-78, 88-122, 124-158, 159-193, 207-241, and 363-397; these read LDESVLELTSQILGANPDFATLWNCRREVLQQLEV, LVKAELGFLESCLRVNPKSYGTWHHRCWLLSRLPE, NWARELELCARFLEVDERNFHCWDYRRFVAAQAAV, PPAEELAFTDSLITRNFSNYSSWHYRSCLLPQLHP, VLLKELELVQNAFFTDPNDQSAWFYHRWLLGRADP, and VLQSELESCKELQELEPENKWCLLTIILLMRALDP. Phosphoserine is present on serine 98. LRR repeat units follow at residues 442–463, 464–486, 487–508, 509–530, and 534–555; these read EVRVLHLGHKDLTVLCHLEQLL, LVTHLDLSHNRLRALPPALAALR, CLEVLQANDNAIESLDGVTNLP, RLQELILCNNRLQQPAVLQPLT, and RLTLLNLQGNPLCQAEGSSEHL.

Belongs to the protein prenyltransferase subunit alpha family. As to quaternary structure, heterotrimer composed of RABGGTA, RABGGTB and CHM; within this trimer, RABGGTA and RABGGTB form the catalytic component B, while CHM (component A) mediates peptide substrate binding. The Rab GGTase dimer (RGGT) interacts with CHM (component A) prior to Rab protein binding; the association is stabilized by geranylgeranyl pyrophosphate (GGpp). The CHM:RGGT:Rab complex is destabilized by GGpp. Interacts with non-phosphorylated form of RAB8A; phosphorylation of RAB8A at 'Thr-72' disrupts this interaction.

It carries out the reaction geranylgeranyl diphosphate + L-cysteinyl-[protein] = S-geranylgeranyl-L-cysteinyl-[protein] + diphosphate. With respect to regulation, the enzymatic reaction requires the aid of a Rab escort protein (also called component A), such as CHM. Its function is as follows. Catalyzes the transfer of a geranylgeranyl moiety from geranylgeranyl diphosphate to both cysteines of Rab proteins with the C-terminal sequence -XXCC, -XCXC and -CCXX, such as RAB1A, RAB3A, RAB5A and RAB7A. This Bos taurus (Bovine) protein is Geranylgeranyl transferase type-2 subunit alpha (RABGGTA).